The primary structure comprises 208 residues: MWTFGRRAAAGLLPRTASRASAWVRNPRGRERIGTCGRRGLHVTANADAIRHSHLNLHYLGQILNIKKQSVCVVHLRNSGTLGNPSSLDETAYERLAEETLDALAEFFEDLADKPYTLKDYDVSFGDGVLTIKLGGDLGTYVINKQTPLLYLWFSGPCSGPKRYDWTGKNWVYSHDGVSLHELLARELTEALNTKLDLSSLAYSGKGT.

The transit peptide at 1-40 directs the protein to the mitochondrion; the sequence is MWTFGRRAAAGLLPRTASRASAWVRNPRGRERIGTCGRRG.

This sequence belongs to the frataxin family. In terms of assembly, component of the mitochondrial core iron-sulfur cluster (ISC) complex composed of NFS1, LYRM4, NDUFAB1, ISCU, FXN, and FDX2; this complex is a heterohexamer containing two copies of each monomer. Homodimer. Monomer (probable predominant form). Oligomer. Monomers and polymeric aggregates of &gt;1 MDa have been isolated from mitochondria. A small fraction of heterologous overexpressed recombinant frataxin forms high-molecular weight aggregates that incorporate iron. Interacts with LYRM4. Interacts (via ferrous form) with ISCU; the interaction is possible when both are bound to the dimeric form of the cysteine desulfurase complex (NFS1:LYRM4) and the interaction enhances FXN interaction to the dimeric form of the cysteine desulfurase complex (NFS1:LYRM4). Interacts with FECH; one iron-bound FXN monomer seems to interact with a FECH homodimer. Interacts with SDHA and SDHB. Interacts with ACO2; the interaction is dependent on citrate. Interacts with HSPA9. As to quaternary structure, interacts with ACO1. Interacts with ISCU (cytoplasmic form). Processed in two steps by mitochondrial processing peptidase (MPP). MPP first cleaves the precursor to intermediate form and subsequently converts the intermediate to yield frataxin mature form (frataxin(81-210)) which is the predominant form. The additional forms, frataxin(56-210) and frataxin(78-210), seem to be produced when the normal maturation process is impaired; their physiological relevance is unsure.

It is found in the mitochondrion. Its subcellular location is the cytoplasm. The protein localises to the cytosol. The enzyme catalyses 4 Fe(2+) + O2 + 4 H(+) = 4 Fe(3+) + 2 H2O. Functionally, functions as an activator of persulfide transfer to the scaffoding protein ISCU as component of the core iron-sulfur cluster (ISC) assembly complex and participates to the [2Fe-2S] cluster assembly. Accelerates sulfur transfer from NFS1 persulfide intermediate to ISCU and to small thiols such as L-cysteine and glutathione leading to persulfuration of these thiols and ultimately sulfide release. Binds ferrous ion and is released from FXN upon the addition of both L-cysteine and reduced FDX2 during [2Fe-2S] cluster assembly. The core iron-sulfur cluster (ISC) assembly complex is involved in the de novo synthesis of a [2Fe-2S] cluster, the first step of the mitochondrial iron-sulfur protein biogenesis. This process is initiated by the cysteine desulfurase complex (NFS1:LYRM4:NDUFAB1) that produces persulfide which is delivered on the scaffold protein ISCU in a FXN-dependent manner. Then this complex is stabilized by FDX2 which provides reducing equivalents to accomplish the [2Fe-2S] cluster assembly. Finally, the [2Fe-2S] cluster is transferred from ISCU to chaperone proteins, including HSCB, HSPA9 and GLRX5. May play a role in the protection against iron-catalyzed oxidative stress through its ability to catalyze the oxidation of Fe(2+) to Fe(3+); the oligomeric form but not the monomeric form has in vitro ferroxidase activity. May be able to store large amounts of iron in the form of a ferrihydrite mineral by oligomerization; however, the physiological relevance is unsure as reports are conflicting and the function has only been shown using heterologous overexpression systems. May function as an iron chaperone protein that protects the aconitase [4Fe-4S]2+ cluster from disassembly and promotes enzyme reactivation. May play a role as a high affinity iron binding partner for FECH that is capable of both delivering iron to ferrochelatase and mediating the terminal step in mitochondrial heme biosynthesis. In terms of biological role, modulates the RNA-binding activity of ACO1. May be involved in the cytoplasmic iron-sulfur protein biogenesis. May contribute to oxidative stress resistance and overall cell survival. This chain is Frataxin, mitochondrial, found in Rattus norvegicus (Rat).